The following is a 778-amino-acid chain: MASKSEKAVKKAQKLSKEPSVELTDTKSSDNVTPKQKSPNSTEEDVSLNLKTLKAKKFKLAFVLITVLSFITRFWNLNLPGEVVFDEVHFGKFASYYLQGKYFFDLHPPFAKLLLALVAKLAGYDGHYLFDNIGDNYKDNGVPYVTIRAWPALLSSLVPPVVFLIMKESGYDLLACIVSSSLVLFDNAHVTEGRLILLDATLLFSMVCAIYCYVRFFKLRHTPFSRPWWAWLFFTGFFLSCTISTKYVGFFTFLSIGLSVCLELWYLWDIKTGLTVERFFQHFLARFFCLIFFPFLFFLFWFYMHFNILTISGPGDSFMSLEFQETLSDNPITANSTILNYYDIVTIKHMGTNAFLHSHPEKYPIPYDDGRISSGGQQVTGYQFDDENNYWMILPADHYDPPIEAKLNVPVKNMDYIKLHHVGTNTDLMTHDVASPYHPTNEEFTTVSVDESAGKKHEYTLFQVVMSDNTDPQRPLYTKASSFKLIHKLTHVAMWSDPKPLPDWAFKQLEINGAKNIQTGSIFWTFDDIIGLKDSRLKKEKKIPKKLPFWKKYLELQLTMFRQNNMLTEFHPYSSNPSDWFTLHHGIAFWAKSEENKQIYLLGNPIGWWIIAGTVLSTTVVAAAEILLRQRGIRTLPETVRNHFYRSTMFFYMTYVFHYLPFFIMGRQLFLHHYLPAHLAGSLLVGAFIQLACRKSFRSPVSAGVPIPKDVDEKGHSKCHRKYGHVIELICTLLLIFVVIYCFTFFAPMTYGDKSLSVDEWTRRKWLDSWVFQYQKQN.

A compositionally biased stretch (basic and acidic residues) spans 1–28; that stretch reads MASKSEKAVKKAQKLSKEPSVELTDTKS. The interval 1-44 is disordered; it reads MASKSEKAVKKAQKLSKEPSVELTDTKSSDNVTPKQKSPNSTEE. The span at 29–41 shows a compositional bias: polar residues; sequence SDNVTPKQKSPNS. Residue Asn40 is glycosylated (N-linked (GlcNAc...) asparagine). 7 consecutive transmembrane segments (helical) span residues 60-80, 103-123, 145-165, 196-216, 223-243, 248-268, and 288-308; these read LAFV…LNLP, FFDL…KLAG, VTIR…VFLI, ILLD…YVRF, PFSR…SCTI, VGFF…WYLW, and FCLI…HFNI. Asn335 is a glycosylation site (N-linked (GlcNAc...) asparagine). 3 consecutive MIR domains span residues 336–396, 408–467, and 474–529; these read STIL…ILPA, NVPV…VVMS, and RPLY…FDDI. The next 4 membrane-spanning stretches (helical) occupy residues 608-628, 644-664, 669-689, and 726-746; these read WWII…EILL, FYRS…PFFI, LFLH…GAFI, and VIEL…FTFF.

This sequence belongs to the glycosyltransferase 39 family.

The protein resides in the endoplasmic reticulum membrane. The catalysed reaction is a di-trans,poly-cis-dolichyl beta-D-mannosyl phosphate + L-seryl-[protein] = 3-O-(alpha-D-mannosyl)-L-seryl-[protein] + a di-trans,poly-cis-dolichyl phosphate + H(+). It catalyses the reaction a di-trans,poly-cis-dolichyl beta-D-mannosyl phosphate + L-threonyl-[protein] = 3-O-(alpha-D-mannosyl)-L-threonyl-[protein] + a di-trans,poly-cis-dolichyl phosphate + H(+). Its pathway is protein modification; protein glycosylation. Functionally, transfers mannose from Dol-P-mannose to Ser or Thr residues on proteins. Required for normal cell wall and septum formation. The chain is Dolichyl-phosphate-mannose--protein mannosyltransferase 4 (ogm4) from Schizosaccharomyces pombe (strain 972 / ATCC 24843) (Fission yeast).